Here is a 269-residue protein sequence, read N- to C-terminus: uncharacterized protein (269 aa).

Positions 5–73 constitute an HTH gntR-type domain; it reads APKWRELADR…RGHGTVVRRK (69 aa). The H-T-H motif DNA-binding region spans 33–52; the sequence is IRDLVEAGEGSKETVHRAYK.

Its function is as follows. The imp locus inhibits the extrachromosomal maintenance of the Streptomyces plasmid SLP1. This is an uncharacterized protein from Streptomyces coelicolor (strain ATCC BAA-471 / A3(2) / M145).